Reading from the N-terminus, the 614-residue chain is Vitamin B12 transporter BtuB (614 aa).

The N-terminal stretch at 1 to 20 (MIKKASLLTACSVTAFSAWA) is a signal peptide. The short motif at 26 to 33 (DTLVVTAN) is the TonB box element. The TBDR plug domain occupies 38–152 (PRSTVLAPTT…IGGVVNIITT (115 aa)). Residues leucine 83, serine 85, asparagine 92, and 110-111 (GS) each bind cyanocob(III)alamin. Residues 155–614 (EPGTEISAGW…EYTLSGSYTF (460 aa)) enclose the TBDR beta-barrel domain. The next 3 membrane-spanning stretches (beta stranded) occupy residues 158–165 (TEISAGWG), 169–178 (YQNYDVSTQQ), and 184–195 (TRVTLLGDYAHT). 4 residues coordinate Ca(2+): aspartate 199, glutamine 211, aspartate 213, and aspartate 215. Transmembrane regions (beta stranded) follow at residues 217 to 227 (FLSKTLYGALE) and 232 to 248 (DAWS…NRTN). Ca(2+)-binding residues include tyrosine 249 and aspartate 250. A cyanocob(III)alamin-binding site is contributed by alanine 251. Residue aspartate 261 participates in Ca(2+) binding. Transmembrane regions (beta stranded) follow at residues 263–277 (RKLY…LRYN), 279–296 (ELIK…KDYN), 309–325 (TLDE…NNII), 328–337 (HGNVGAGVDW), 353–369 (YDQR…QQVG), 371–381 (FTFEGAARSDD), 385–400 (FGRH…WEFI), 403–417 (YRFI…KAPN), 434–443 (KSKQWEGAFE), 449–458 (VNWRISGYRN), 473–490 (YYNE…TANF), 494–509 (PLTH…ARNA), 517–529 (RRAK…QLDW), and 535–550 (DWGI…YDKD). Residue threonine 309 coordinates cyanocob(III)alamin. Residue arginine 517 coordinates cyanocob(III)alamin. Tyrosine 551 provides a ligand contact to cyanocob(III)alamin. 3 consecutive transmembrane segments (beta stranded) span residues 558–572 (TVKM…LAVA), 585–596 (IANLFDKDYETV), and 602–614 (AGRE…SYTF). A TonB C-terminal box motif is present at residues 597–614 (YGYQTAGREYTLSGSYTF).

The protein belongs to the TonB-dependent receptor family. BtuB (TC 1.B.14.3.1) subfamily.

Its subcellular location is the cell outer membrane. Involved in the active translocation of vitamin B12 (cyanocobalamin) across the outer membrane to the periplasmic space. It derives its energy for transport by interacting with the trans-periplasmic membrane protein TonB. This is Vitamin B12 transporter BtuB from Escherichia coli O157:H7.